A 53-amino-acid chain; its full sequence is Large ribosomal subunit protein bL33B (53 aa).

The protein belongs to the bacterial ribosomal protein bL33 family.

In Sorangium cellulosum (strain So ce56) (Polyangium cellulosum (strain So ce56)), this protein is Large ribosomal subunit protein bL33B.